Here is a 314-residue protein sequence, read N- to C-terminus: Acetylglutamate kinase (314 aa).

Substrate is bound by residues 76–77 (GG), Arg98, and Asn199.

The protein belongs to the acetylglutamate kinase family. ArgB subfamily.

It is found in the cytoplasm. It catalyses the reaction N-acetyl-L-glutamate + ATP = N-acetyl-L-glutamyl 5-phosphate + ADP. It functions in the pathway amino-acid biosynthesis; L-arginine biosynthesis; N(2)-acetyl-L-ornithine from L-glutamate: step 2/4. In terms of biological role, catalyzes the ATP-dependent phosphorylation of N-acetyl-L-glutamate. This Bifidobacterium longum (strain DJO10A) protein is Acetylglutamate kinase.